We begin with the raw amino-acid sequence, 434 residues long: Fez family zinc finger protein 2 (434 aa).

The Engrailed homology 1 repressor signature appears at serine 27–proline 42. C2H2-type zinc fingers lie at residues phenylalanine 253 to histidine 275, phenylalanine 281 to histidine 303, histidine 309 to histidine 331, phenylalanine 337 to histidine 359, tyrosine 365 to histidine 387, and phenylalanine 393 to histidine 416.

This sequence belongs to the krueppel C2H2-type zinc-finger protein family.

The protein localises to the nucleus. Its function is as follows. Transcription repressor. Component of the regulatory cascade that controls the development of dopaminergic (DA) and serotonergic (5HT) neurons. This chain is Fez family zinc finger protein 2 (fezf2), found in Xenopus laevis (African clawed frog).